The primary structure comprises 584 residues: Probable DNA ligase (584 aa).

Position 248 (E248) interacts with ATP. The N6-AMP-lysine intermediate role is filled by K250. ATP contacts are provided by R255, R270, E299, F339, R416, and K422.

This sequence belongs to the ATP-dependent DNA ligase family. Mg(2+) serves as cofactor.

The enzyme catalyses ATP + (deoxyribonucleotide)n-3'-hydroxyl + 5'-phospho-(deoxyribonucleotide)m = (deoxyribonucleotide)n+m + AMP + diphosphate.. Its function is as follows. DNA ligase that seals nicks in double-stranded DNA during DNA replication, DNA recombination and DNA repair. The chain is Probable DNA ligase from Aquifex aeolicus (strain VF5).